The primary structure comprises 123 residues: Protein LLP homolog (123 aa).

Positions 1 to 21 (MAKSLRSKWKRKMRAEKRKKN) are enriched in basic residues. Disordered regions lie at residues 1-22 (MAKS…KKNA) and 61-123 (DLDV…KLAW). Over residues 70–89 (ESSKMDTELKRNKKNLRDQH) the composition is skewed to basic and acidic residues. Over residues 100-123 (QQKKLKSQCGKKKGKSKQAKKLAW) the composition is skewed to basic residues.

The protein belongs to the learning-associated protein family.

Its subcellular location is the nucleus. It localises to the nucleolus. The protein localises to the chromosome. In terms of biological role, regulates dendritic and spine growth and synaptic transmission. This is Protein LLP homolog (llph) from Xenopus laevis (African clawed frog).